We begin with the raw amino-acid sequence, 327 residues long: MESFAGKELQHSGAVHAYQLDGKGGITPIGEQDVVNSEKPCWLHLDSTLPASARWLNKTTLVPDSVRNALAGESIRPRVTRLGDGTLITLRSINLNANARPDQLVAVRVFITDKLIISTRRRKVLAIDEILTDLKEGNGPTDSGSWLVSIAESLTDHTSEFIDDLHEKIIDLEDDLLEQKIPPRGELALIRKQLIVLRRYMTPQRDVFSRISGEKLPWMQDDDRRRMQEIADRLGRGLEDLDASIARTTVLSDEITALMTEAMNRRTYTMSLLAMVFLPTTFLTGLFGVNLGGIPGGDAPFGFFTFCLMLVILVGGVAWWLKRSKWL.

At Met-1–Ser-271 the chain is on the cytoplasmic side. A helical membrane pass occupies residues Leu-272–Gly-292. Over Gly-293–Pro-300 the chain is Periplasmic. The chain crosses the membrane as a helical span at residues Phe-301–Leu-321. At Lys-322–Leu-327 the chain is on the cytoplasmic side.

The protein belongs to the CorA metal ion transporter (MIT) (TC 1.A.35) family.

It is found in the cell inner membrane. The enzyme catalyses Zn(2+)(out) + H(+)(out) = Zn(2+)(in) + H(+)(in). Zinc transporter. Acts as a Zn(2+):proton symporter, which likely mediates zinc ion uptake. The chain is Zinc transport protein ZntB from Pectobacterium carotovorum subsp. carotovorum (strain PC1).